Consider the following 482-residue polypeptide: Glutamyl-tRNA(Gln) amidotransferase subunit A (482 aa).

Residues K75 and S150 each act as charge relay system in the active site. The active-site Acyl-ester intermediate is the S174.

This sequence belongs to the amidase family. GatA subfamily. Heterotrimer of A, B and C subunits.

It carries out the reaction L-glutamyl-tRNA(Gln) + L-glutamine + ATP + H2O = L-glutaminyl-tRNA(Gln) + L-glutamate + ADP + phosphate + H(+). Its function is as follows. Allows the formation of correctly charged Gln-tRNA(Gln) through the transamidation of misacylated Glu-tRNA(Gln) in organisms which lack glutaminyl-tRNA synthetase. The reaction takes place in the presence of glutamine and ATP through an activated gamma-phospho-Glu-tRNA(Gln). The protein is Glutamyl-tRNA(Gln) amidotransferase subunit A of Acaryochloris marina (strain MBIC 11017).